The chain runs to 192 residues: Rhomboid protease GlpG (192 aa).

Topologically, residues 1–10 (MKNFLAQQGK) are cytoplasmic. A helical transmembrane segment spans residues 11–31 (ITLILTALCVLIYLAQQLGFE). Residues 32–57 (DDIMYLMHYPAYEEQDSEVWRYISHT) lie on the Periplasmic side of the membrane. The chain crosses the membrane as a helical span at residues 58–78 (LVHLSNLHILFNLSWFFIFGG). Residues 79 to 82 (MIER) are Cytoplasmic-facing. A helical transmembrane segment spans residues 83-103 (TFGSVKLLMLYVVASAITGYV). Over 104–107 (QNYV) the chain is Periplasmic. Residues 108–128 (SGPAFFGLSGVVYAVLGYVFI) traverse the membrane as a helical segment. Serine 116 acts as the Nucleophile in catalysis. The Cytoplasmic segment spans residues 129–141 (RDKLNHHLFDLPE). The chain crosses the membrane as a helical span at residues 142-162 (GFFTMLLVGIALGFISPLFGV). Position 163 (glutamate 163) is a topological domain, periplasmic. The helical transmembrane segment at 164 to 184 (MGNAAHISGLIVGLIWGFIDS) threads the bilayer. Residue histidine 169 is part of the active site. The Cytoplasmic portion of the chain corresponds to 185-192 (KLRKNSLE).

Belongs to the peptidase S54 family.

The protein resides in the cell inner membrane. It carries out the reaction Cleaves type-1 transmembrane domains using a catalytic dyad composed of serine and histidine that are contributed by different transmembrane domains.. In terms of biological role, rhomboid-type serine protease that catalyzes intramembrane proteolysis. This chain is Rhomboid protease GlpG (glpG), found in Haemophilus influenzae (strain ATCC 51907 / DSM 11121 / KW20 / Rd).